The chain runs to 400 residues: Argininosuccinate synthase (400 aa).

8–16 lines the ATP pocket; that stretch reads AYSGGLDTS. L-citrulline is bound by residues Y87 and S92. Residue G117 coordinates ATP. 3 residues coordinate L-aspartate: T119, N123, and D124. Residue N123 participates in L-citrulline binding. Residues R127, S175, E259, and Y271 each coordinate L-citrulline.

Belongs to the argininosuccinate synthase family. Type 1 subfamily. Homotetramer.

The protein resides in the cytoplasm. It catalyses the reaction L-citrulline + L-aspartate + ATP = 2-(N(omega)-L-arginino)succinate + AMP + diphosphate + H(+). Its pathway is amino-acid biosynthesis; L-arginine biosynthesis; L-arginine from L-ornithine and carbamoyl phosphate: step 2/3. In Parafrankia sp. (strain EAN1pec), this protein is Argininosuccinate synthase.